Consider the following 102-residue polypeptide: NADH-quinone oxidoreductase subunit K (102 aa).

The next 3 helical transmembrane spans lie at 6 to 26 (ATHF…GVLT), 31 to 51 (LVIF…LIGF), and 62 to 82 (VFAL…LGIV).

It belongs to the complex I subunit 4L family. In terms of assembly, NDH-1 is composed of 14 different subunits. Subunits NuoA, H, J, K, L, M, N constitute the membrane sector of the complex.

It is found in the cell membrane. It carries out the reaction a quinone + NADH + 5 H(+)(in) = a quinol + NAD(+) + 4 H(+)(out). Functionally, NDH-1 shuttles electrons from NADH, via FMN and iron-sulfur (Fe-S) centers, to quinones in the respiratory chain. The immediate electron acceptor for the enzyme in this species is believed to be ubiquinone. Couples the redox reaction to proton translocation (for every two electrons transferred, four hydrogen ions are translocated across the cytoplasmic membrane), and thus conserves the redox energy in a proton gradient. This Thermomicrobium roseum (strain ATCC 27502 / DSM 5159 / P-2) protein is NADH-quinone oxidoreductase subunit K.